A 252-amino-acid chain; its full sequence is Octanoyltransferase (252 aa).

The 182-residue stretch at 56 to 237 (ADTGDEIWLV…RLIANLDGAS (182 aa)) folds into the BPL/LPL catalytic domain. Residues 96 to 103 (RGGQITYH), 168 to 170 (ALG), and 181 to 183 (GLS) contribute to the substrate site. Cys-199 functions as the Acyl-thioester intermediate in the catalytic mechanism.

The protein belongs to the LipB family.

Its subcellular location is the cytoplasm. The enzyme catalyses octanoyl-[ACP] + L-lysyl-[protein] = N(6)-octanoyl-L-lysyl-[protein] + holo-[ACP] + H(+). It functions in the pathway protein modification; protein lipoylation via endogenous pathway; protein N(6)-(lipoyl)lysine from octanoyl-[acyl-carrier-protein]: step 1/2. Catalyzes the transfer of endogenously produced octanoic acid from octanoyl-acyl-carrier-protein onto the lipoyl domains of lipoate-dependent enzymes. Lipoyl-ACP can also act as a substrate although octanoyl-ACP is likely to be the physiological substrate. This is Octanoyltransferase from Burkholderia lata (strain ATCC 17760 / DSM 23089 / LMG 22485 / NCIMB 9086 / R18194 / 383).